Here is a 233-residue protein sequence, read N- to C-terminus: Small ribosomal subunit protein uS7m (233 aa).

Residues 1-28 (MAAPTGKLLVHRIRAGLTCLTQVRWSRY) constitute a mitochondrion transit peptide.

The protein belongs to the universal ribosomal protein uS7 family. Component of the mitochondrial ribosome small subunit (28S) which comprises a 12S rRNA and about 30 distinct proteins.

It localises to the mitochondrion. This chain is Small ribosomal subunit protein uS7m (mrps7), found in Xenopus laevis (African clawed frog).